Consider the following 579-residue polypeptide: Salivary alpha-glucosidase (579 aa).

A signal peptide spans 1-18; that stretch reads MKIFVPLLSFLLAGLTTG. Residues D37, D39, D41, I43, D45, and N118 each contribute to the Ca(2+) site. N-linked (GlcNAc...) asparagine glycosylation is found at N118 and N151. Residue D189 participates in Ca(2+) binding. Residue D219 is the Nucleophile of the active site. 3 residues coordinate Ca(2+): Y223, L224, and E226. A glycan (N-linked (GlcNAc...) asparagine) is linked at N282. The Proton donor role is filled by E290. N-linked (GlcNAc...) asparagine glycans are attached at residues N304, N325, and N401. Residue N325 coordinates N-acetyl-beta-D-glucosamine.

The protein belongs to the glycosyl hydrolase 13 family. In terms of tissue distribution, saliva (at protein level). Proximal lateral lobes of the salivary gland (at protein level).

The protein localises to the secreted. The catalysed reaction is Hydrolysis of terminal, non-reducing (1-&gt;4)-linked alpha-D-glucose residues with release of alpha-D-glucose.. Its function is as follows. Functions as a glucosidase that shows high activity toward sucrose, a major component of nectar. Assists the mosquito in its sugar-feeding capabilities. The sequence is that of Salivary alpha-glucosidase from Aedes aegypti (Yellowfever mosquito).